The following is a 388-amino-acid chain: Putative F-box protein At3g17490 (388 aa).

One can recognise an F-box domain in the interval 1–46; the sequence is MMMPHLSEDLVEEILSRVPAISLKRLRYTCKQWNALFNDQRFSKKH.

The protein is Putative F-box protein At3g17490 of Arabidopsis thaliana (Mouse-ear cress).